The following is a 289-amino-acid chain: ATP synthase gamma chain (289 aa).

This sequence belongs to the ATPase gamma chain family. In terms of assembly, F-type ATPases have 2 components, CF(1) - the catalytic core - and CF(0) - the membrane proton channel. CF(1) has five subunits: alpha(3), beta(3), gamma(1), delta(1), epsilon(1). CF(0) has three main subunits: a, b and c.

The protein resides in the cell inner membrane. Produces ATP from ADP in the presence of a proton gradient across the membrane. The gamma chain is believed to be important in regulating ATPase activity and the flow of protons through the CF(0) complex. This Dichelobacter nodosus (strain VCS1703A) protein is ATP synthase gamma chain.